Consider the following 657-residue polypeptide: Glycogen debranching enzyme (657 aa).

Residue D336 is the Nucleophile of the active site. E371 acts as the Proton donor in catalysis. A disordered region spans residues 460 to 479; sequence ANGEENRDGTNNNYSNNHGK.

It belongs to the glycosyl hydrolase 13 family.

It carries out the reaction Hydrolysis of (1-&gt;6)-alpha-D-glucosidic linkages to branches with degrees of polymerization of three or four glucose residues in limit dextrin.. It participates in glycan degradation; glycogen degradation. Its function is as follows. Removes maltotriose and maltotetraose chains that are attached by 1,6-alpha-linkage to the limit dextrin main chain, generating a debranched limit dextrin. The chain is Glycogen debranching enzyme from Shigella flexneri serotype 5b (strain 8401).